The following is a 268-amino-acid chain: Ribosomal RNA small subunit methyltransferase A (268 aa).

S-adenosyl-L-methionine-binding residues include Asn18, Leu20, Gly45, Glu66, Asp91, and Asn112.

This sequence belongs to the class I-like SAM-binding methyltransferase superfamily. rRNA adenine N(6)-methyltransferase family. RsmA subfamily.

It localises to the cytoplasm. The enzyme catalyses adenosine(1518)/adenosine(1519) in 16S rRNA + 4 S-adenosyl-L-methionine = N(6)-dimethyladenosine(1518)/N(6)-dimethyladenosine(1519) in 16S rRNA + 4 S-adenosyl-L-homocysteine + 4 H(+). In terms of biological role, specifically dimethylates two adjacent adenosines (A1518 and A1519) in the loop of a conserved hairpin near the 3'-end of 16S rRNA in the 30S particle. May play a critical role in biogenesis of 30S subunits. This Pseudoalteromonas translucida (strain TAC 125) protein is Ribosomal RNA small subunit methyltransferase A.